The primary structure comprises 284 residues: Probable ADP-ribose 1''-phosphate phosphatase YML087W (284 aa).

Substrate contacts are provided by aspartate 23, glutamine 55, asparagine 80, and aspartate 90. The Macro domain maps to 34–230 (ESIPHAYIQN…HISKELKNVL (197 aa)). Active-site residues include asparagine 80 and aspartate 90. A disulfide bridge links cysteine 128 with cysteine 136. The active site involves histidine 145. Substrate is bound by residues threonine 148 and threonine 195.

Homodimer.

It carries out the reaction ADP-alpha-D-ribose 1''-phosphate + H2O = ADP-D-ribose + phosphate. Highly specific phosphatase involved in the metabolism of ADP-ribose 1''-phosphate (Appr1p) which is produced as a consequence of tRNA splicing. + phosphate. The protein is Probable ADP-ribose 1''-phosphate phosphatase YML087W of Saccharomyces cerevisiae (strain ATCC 204508 / S288c) (Baker's yeast).